The sequence spans 487 residues: Uronate isomerase (487 aa).

Belongs to the metallo-dependent hydrolases superfamily. Uronate isomerase family.

It carries out the reaction D-glucuronate = D-fructuronate. The enzyme catalyses aldehydo-D-galacturonate = keto-D-tagaturonate. The protein operates within carbohydrate metabolism; pentose and glucuronate interconversion. In Caulobacter vibrioides (strain ATCC 19089 / CIP 103742 / CB 15) (Caulobacter crescentus), this protein is Uronate isomerase.